The primary structure comprises 120 residues: Large ribosomal subunit protein bL19 (120 aa).

The protein belongs to the bacterial ribosomal protein bL19 family.

In terms of biological role, this protein is located at the 30S-50S ribosomal subunit interface and may play a role in the structure and function of the aminoacyl-tRNA binding site. The chain is Large ribosomal subunit protein bL19 from Renibacterium salmoninarum (strain ATCC 33209 / DSM 20767 / JCM 11484 / NBRC 15589 / NCIMB 2235).